A 351-amino-acid chain; its full sequence is Homocitrate synthase (351 aa).

The 250-residue stretch at 23–272 folds into the Pyruvate carboxyltransferase domain; it reads IKFCDTTLRD…KLPVDLDTTS (250 aa).

Belongs to the alpha-IPM synthase/homocitrate synthase family.

The catalysed reaction is acetyl-CoA + 2-oxoglutarate + H2O = (2R)-homocitrate + CoA + H(+). This protein is a Fe-Mo-cofactor biosynthetic component. This chain is Homocitrate synthase (nifV), found in Frankia alni.